The following is a 689-amino-acid chain: MSEKTFLVEIGTEELPPKALRSLAESFAANFTAELDNAGLAHGTVQWFAAPRRLALKVANLAEAQPDREIEKRGPAIAQAFDAEGKPSKAAEGWARGCGITVDQAERLTTDKGEWLLYRAYVKGESTEALLPNMVATSLAKLPIPKLMRWGASDVHFVRPVHTVTLLLGDKVIPATILGIQSDRVIRGHRFMGEPEFTIDNADQYPEILRERGKVIADYEERKAKIKADAEEAARKIGGNADLSESLLEEVASLVEWPVVLTAKFEEKFLAVPSEALVYTMKGDQKYFPVYANDGKLLPNFIFVANIESKDPQQIISGNEKVVRPRLADAEFFFNTDRKKRLEDNLPRLQTVLFQQQLGTLRDKTDRIQALAGWIAEQIGADVNHATRAGLLSKCDLMTNMVFEFTDTQGVMGMHYARHDGEAEDVAVALNEQYQPRFAGDDLPSNPVACALAIADKMDTLAGIFGIGQHPKGDKDPFALRRAALGVLRIIVEKNLNLDLQTLTEEAVRLYGDKLTNASVVDDVIDFMLGRFRAWYQDEGYSVDTIQAVLARRPTRPADFDARMKAVSHFRTLEEASALAAANKRVSNILAKATEPLNDIVHASVLKEAAEIELARHLVVLRDKLQPYFADGRYQEALIELAALRAPVDEFFENVMVNAEEKDIRINRLTLLSKLRELFLQVADISLLQ.

The protein belongs to the class-II aminoacyl-tRNA synthetase family. Tetramer of two alpha and two beta subunits.

The protein localises to the cytoplasm. It carries out the reaction tRNA(Gly) + glycine + ATP = glycyl-tRNA(Gly) + AMP + diphosphate. This is Glycine--tRNA ligase beta subunit from Salmonella typhi.